We begin with the raw amino-acid sequence, 262 residues long: Abhydrolase domain-containing protein ACTT2 (262 aa).

The Peroxisomal targeting signal type 1 motif lies at 260–262; the sequence is SKL.

The protein belongs to the AB hydrolase superfamily. AKT2 hydrolase family.

The protein resides in the peroxisome. It participates in mycotoxin biosynthesis. Abhydrolase domain-containing protein; part of the gene clusters that mediate the biosynthesis of the host-selective toxins (HSTs) ACT-toxins responsible for brown spot of tangerine disease by the tangerine pathotype which affects tangerines and mandarins. ACT-toxins consist of three moieties, 9,10-epoxy-8-hydroxy-9-methyl-decatrienoic acid (EDA), valine and a polyketide. ACT-toxin I is toxic to both citrus and pear; toxin II the 5''-deoxy derivative of ACT-toxin I, is highly toxic to pear and slightly toxic to citrus. On cellular level, ACT-toxins affect plasma membrane of susceptible cells and cause a sudden increase in loss of K(+) after a few minutes of toxin treatment. The acyl-CoA ligase ACTT1, the hydrolase ACTT2, the enoyl-CoA hydratases ACTT3 and ACTT6, and the acyl-CoA synthetase ACTT5 are all involved in the biosynthesis of the AK-, AF- and ACT-toxin common 9,10-epoxy-8-hydroxy-9-methyl-decatrienoic acid (EDA) structural moiety. The exact role of each enzyme, and of additional enzymes identified within the AF-toxin clusters have still to be determined. On the other hand, ACTTS1 to ACTTS4 are specific to the tangerine pathotype. The function of ACTTS3 is to elongate the polyketide chain portion of ACT-toxin that is unique to this toxin. The enoyl-reductase ACTTS2 might complement the missing enoyl-reductase (ER) domain in ACTTS3 in the synthesis of the polyketide portion of ACT-toxin. The roles of the nonribosomal peptide synthetases-related proteins ACTTS1 and ACTTS4 have also still not been elucidated. This chain is Abhydrolase domain-containing protein ACTT2, found in Alternaria alternata (Alternaria rot fungus).